Consider the following 590-residue polypeptide: MAEVRSRSRRTESNWATICCSAFSCLQLYWARIVLRKWFNVSASESDYSADSDDDYEDRSQEFDPISSGVTNPRVDTDGNVIYRPKLRRRNSETFRMQYIDTKAIRICAGTWNVGGRVPSSDLDIDGWLDTLEPADIYVLGLQEIVPLNAGNIFGMEDDQPALEWENLIRDALNRVQPRKLKIKSHSDPPSPSKFKQPEEVPYSVEDMFVETSHDACDGISSMDNKLNSVESTDVPIVSEDSLTNIDVLGSTNDNASCLPIQEYLQRQFSTPNTPDRSLSMQINSDSKREERFSYTERVGLSWPEPPLRLLNQYVSERRGSFKSVNLTITNLRKPSYVRIVSKQMVGVFLTIWVRRNLRKHISNLCVSTVGVGIMGYIGNKGSVSVSMSIYQTPFCFLCTHLSSGEKDTDQEKRNDDVREIHRRTQFLPHSLNANELPRSICNHERIIWLGDLNYRINLSYEKTHELIARKEWQRLVEYDQLSREMTKGNLFEGWSEGTLDFAPTYKYEIDSENYIGDDPESGKRRPAWCDRIIWNGKGMKLFNYRRNEIKLSDHRPVTATFLAEVEVLSPRKLQHALTLTYAEIQGLDA.

Positions 47–73 are disordered; the sequence is DYSADSDDDYEDRSQEFDPISSGVTNP. A compositionally biased stretch (acidic residues) spans 48-57; it reads YSADSDDDYE. Position 60 is a phosphoserine (Ser60). Catalytic stretches follow at residues 445-460 and 523-538; these read ERII…INLS and GKRR…WNGK.

The protein belongs to the inositol polyphosphate 5-phosphatase family. As to expression, expressed ubiquitously.

It catalyses the reaction 1D-myo-inositol 1,4,5-trisphosphate + H2O = 1D-myo-inositol 1,4-bisphosphate + phosphate. The catalysed reaction is 1D-myo-inositol 1,3,4,5-tetrakisphosphate + H2O = 1D-myo-inositol 1,3,4-trisphosphate + phosphate. Functionally, has phosphatase activity toward Ins(1,4,5)P3 and Ins(1,3,4,5)P4, but not toward Ins(1,4)P2, Ins(1)P. Seems to be involved in the abscisic acid (ABA) signaling pathway. Could also be able to hydrolyze PtdIns(4,5)P2 and PtdIns(3,4,5)P3. The polypeptide is Type I inositol polyphosphate 5-phosphatase 1 (Arabidopsis thaliana (Mouse-ear cress)).